The sequence spans 218 residues: MSTKLTWSQWSKKHEIPRKALHTSIGFFALLLQGCGYHAAQIIPVIEIGFIPAFTGDVIRFNWPAFSRLYNRVIGPLMRESEKNAWNGVIFYMIGVWIVLKVFPEEIAVMSVLLLSWCDTTASTVGRKWGKYTPKIAKNKSLAGSLGAFVCGVFCCYVYWGLFRTGPDSLAAQSRIPFPWLCLINGFIGAFAEAMDVWGLDDNLVIPVVSACLLYLIM.

Residues 1–19 (MSTKLTWSQWSKKHEIPRK) lie on the Lumenal side of the membrane. The chain crosses the membrane as a helical span at residues 20–37 (ALHTSIGFFALLLQGCGY). His38 is a topological domain (cytoplasmic). The chain crosses the membrane as a helical span at residues 39–59 (AAQIIPVIEIGFIPAFTGDVI). The Lumenal portion of the chain corresponds to 60–88 (RFNWPAFSRLYNRVIGPLMRESEKNAWNG). Residues 89–109 (VIFYMIGVWIVLKVFPEEIAV) form a helical membrane-spanning segment. Residues 110–142 (MSVLLLSWCDTTASTVGRKWGKYTPKIAKNKSL) are Cytoplasmic-facing. A helical transmembrane segment spans residues 143–163 (AGSLGAFVCGVFCCYVYWGLF). Residues 164-179 (RTGPDSLAAQSRIPFP) are Lumenal-facing. Transmembrane regions (helical) follow at residues 180 to 200 (WLCL…VWGL) and 201 to 217 (DDNL…LYLI). Residue Met218 is a topological domain, lumenal.

Belongs to the DGK1 family. Ca(2+) is required as a cofactor. It depends on Mg(2+) as a cofactor.

Its subcellular location is the endoplasmic reticulum membrane. The protein localises to the nucleus membrane. It carries out the reaction a 1,2-diacyl-sn-glycerol + CTP = a 1,2-diacyl-sn-glycero-3-phosphate + CDP + H(+). Its function is as follows. CTP-dependent diacylglycerol kinase that catalyzes the phosphorylation of diacylglycerol (DAG) to phosphatidate (PA). Controls phosphatidate levels at the nuclear envelope. Counteracts the activity of PA phosphatase ned1. May be involved in vesicle trafficking between the endoplasmic reticulum and the Golgi apparatus. Involved in pre-tRNA splicing. In Schizosaccharomyces pombe (strain 972 / ATCC 24843) (Fission yeast), this protein is CTP-dependent diacylglycerol kinase 1 (ptp4).